The sequence spans 859 residues: Leucine--tRNA ligase (859 aa).

The 'HIGH' region signature appears at 42–52; the sequence is PYPSGRLHMGH. A 'KMSKS' region motif is present at residues 618 to 622; that stretch reads KMSKS. Residue Lys-621 coordinates ATP.

It belongs to the class-I aminoacyl-tRNA synthetase family.

It localises to the cytoplasm. The enzyme catalyses tRNA(Leu) + L-leucine + ATP = L-leucyl-tRNA(Leu) + AMP + diphosphate. The polypeptide is Leucine--tRNA ligase (Shewanella woodyi (strain ATCC 51908 / MS32)).